Here is a 247-residue protein sequence, read N- to C-terminus: Hydroxyacylglutathione hydrolase 1 (247 aa).

The Zn(2+) site is built by His-54, His-56, Asp-58, His-59, His-111, Asp-128, and His-165.

The protein belongs to the metallo-beta-lactamase superfamily. Glyoxalase II family. In terms of assembly, monomer. Requires Zn(2+) as cofactor.

It carries out the reaction an S-(2-hydroxyacyl)glutathione + H2O = a 2-hydroxy carboxylate + glutathione + H(+). It functions in the pathway secondary metabolite metabolism; methylglyoxal degradation; (R)-lactate from methylglyoxal: step 2/2. Thiolesterase that catalyzes the hydrolysis of S-D-lactoyl-glutathione to form glutathione and D-lactic acid. The chain is Hydroxyacylglutathione hydrolase 1 from Vibrio vulnificus (strain YJ016).